The primary structure comprises 472 residues: Argininosuccinate lyase (472 aa).

Belongs to the lyase 1 family. Argininosuccinate lyase subfamily.

The protein localises to the cytoplasm. It carries out the reaction 2-(N(omega)-L-arginino)succinate = fumarate + L-arginine. The protein operates within amino-acid biosynthesis; L-arginine biosynthesis; L-arginine from L-ornithine and carbamoyl phosphate: step 3/3. This chain is Argininosuccinate lyase, found in Mycolicibacterium paratuberculosis (strain ATCC BAA-968 / K-10) (Mycobacterium paratuberculosis).